We begin with the raw amino-acid sequence, 375 residues long: Acyl-coenzyme A diphosphatase NUDT19 (375 aa).

The Nudix hydrolase domain occupies 15-263 (AASIVLAAGW…IWLPPPQFYE (249 aa)). A disordered region spans residues 91–116 (LGPAPFSRTAFPSLPDTDDHKTDNTG). Residues 116-137 (GTLPEDVAFRICAVREAFEEAG) carry the Nudix box motif. Mg(2+) is bound by residues E131 and E135. Residues 373 to 375 (SHL) carry the Microbody targeting signal motif.

Belongs to the Nudix hydrolase family. Monomer. It depends on Mg(2+) as a cofactor. Mn(2+) serves as cofactor.

The protein localises to the peroxisome. The catalysed reaction is an acyl-CoA + H2O = an acyl-4'-phosphopantetheine + adenosine 3',5'-bisphosphate + 2 H(+). It catalyses the reaction CoA + H2O = (R)-4'-phosphopantetheine + adenosine 3',5'-bisphosphate + 2 H(+). It carries out the reaction hexanoyl-CoA + H2O = hexanoyl-4'-phosphopantetheine + adenosine 3',5'-bisphosphate + 2 H(+). The enzyme catalyses octanoyl-CoA + H2O = S-octanoyl-4'-phosphopantetheine + adenosine 3',5'-bisphosphate + 2 H(+). The catalysed reaction is butanoyl-CoA + H2O = S-butanoyl-4'-phosphopantetheine + adenosine 3',5'-bisphosphate + 2 H(+). It catalyses the reaction propanoyl-CoA + H2O = propanoyl-4'-phosphopantetheine + adenosine 3',5'-bisphosphate + 2 H(+). It carries out the reaction malonyl-CoA + H2O = malonyl-4'-phosphopantetheine + adenosine 3',5'-bisphosphate + 2 H(+). The enzyme catalyses succinyl-CoA + H2O = succinyl-4'-phosphopantetheine + adenosine 3',5'-bisphosphate + 2 H(+). The catalysed reaction is choloyl-CoA + H2O = S-choloyl-4'-phosphopantetheine + adenosine 3',5'-bisphosphate + 2 H(+). It catalyses the reaction 4,8-dimethylnonanoyl-CoA + H2O = S-(4,8-dimethylnonanoyl)-4'-phosphopantetheine + adenosine 3',5'-bisphosphate + 2 H(+). It carries out the reaction (9Z,12Z,15Z)-octadecatrienoyl-CoA + H2O = S-(9Z,12Z,15Z-octadecatrienoyl)-4'-phosphopantetheine + adenosine 3',5'-bisphosphate + 2 H(+). The enzyme catalyses (9Z,12Z)-octadecadienoyl-CoA + H2O = S-(9Z,12Z-octadecadienoyl)-4'-phosphopantetheine + adenosine 3',5'-bisphosphate + 2 H(+). The catalysed reaction is (9Z)-hexadecenoyl-CoA + H2O = S-(9Z-hexadecenoyl)-4'-phosphopantetheine + adenosine 3',5'-bisphosphate + 2 H(+). It catalyses the reaction (9Z)-tetradecenoyl-CoA + H2O = S-(9Z-tetradecenoyl)-4'-phosphopantetheine + adenosine 3',5'-bisphosphate + 2 H(+). It carries out the reaction (6Z)-octenoyl-CoA + H2O = S-(6Z-octenoyl)-4'-phosphopantetheine + adenosine 3',5'-bisphosphate + 2 H(+). The enzyme catalyses hexadecanoyl-CoA + H2O = S-hexadecanoyl-4'-phosphopantetheine + adenosine 3',5'-bisphosphate + 2 H(+). The catalysed reaction is tetradecanoyl-CoA + H2O = tetradecanoyl-4'-phosphopantetheine + adenosine 3',5'-bisphosphate + 2 H(+). It catalyses the reaction dodecanoyl-CoA + H2O = S-dodecanoyl-4'-phosphopantetheine + adenosine 3',5'-bisphosphate + 2 H(+). It carries out the reaction a 5'-end CoA-ribonucleoside in mRNA + H2O = a 5'-end phospho-adenosine-phospho-ribonucleoside in mRNA + (R)-4'-phosphopantetheine + 2 H(+). In terms of biological role, fatty acyl-coenzyme A (CoA) diphosphatase that hydrolyzes fatty acyl-CoA to yield acyl-4'-phosphopantetheine and adenosine 3',5'-bisphosphate. Mediates the hydrolysis of a wide range of CoA esters, including choloyl-CoA and branched-chain fatty-acyl-CoA esters and at low substrate concentrations medium and long-chain fatty-acyl-CoA esters are the primary substrates. Highest activity seen with medium-chain acyl-CoA esters and higher rates of activity seen with the unsaturated acyl-CoA esters compared with the saturated esters. Exhibits decapping activity towards dpCoA-capped RNAs in vitro. In Homo sapiens (Human), this protein is Acyl-coenzyme A diphosphatase NUDT19 (NUDT19).